Here is a 312-residue protein sequence, read N- to C-terminus: Olfactory receptor 6C1 (312 aa).

The Extracellular portion of the chain corresponds to 1 to 23 (MRNHTEITEFILLGLTDDPNFQV). An N-linked (GlcNAc...) asparagine glycan is attached at asparagine 3. Residues 24–44 (VIFVFLLITYMLSITGNLTLI) traverse the membrane as a helical segment. Topologically, residues 45–52 (TITLLDSH) are cytoplasmic. A helical transmembrane segment spans residues 53–73 (LQTPMYFFLRNFSILEISFTT). The Extracellular segment spans residues 74–97 (VSIPKFLGNIISGDKTISFNNCIV). A disulfide bridge connects residues cysteine 95 and cysteine 187. Residues 98-118 (QLFFFILLGVTEFYLLAAMSY) traverse the membrane as a helical segment. Topologically, residues 119 to 137 (DRYVAICKPLHCLSIMNRR) are cytoplasmic. A helical membrane pass occupies residues 138–158 (VCTLLVFTSWLVSFLIIFPAL). Residues 159 to 195 (MLLLKLHYCRSNIIDHFTCDYFPLLQLACSDTKFLEV) lie on the Extracellular side of the membrane. The chain crosses the membrane as a helical span at residues 196–215 (MGFSCAAFTLMFTLALIFLS). Residues 216-235 (YIYIIRTILRIPSTSQRTKA) lie on the Cytoplasmic side of the membrane. The helical transmembrane segment at 236 to 256 (FSTCSSHMVVVSISYGSCIFM) threads the bilayer. At 257-269 (YIKPSAKDRVSLS) the chain is on the extracellular side. Residues 270–290 (KGVAILNTSVAPMMNPFIYSL) traverse the membrane as a helical segment. At 291–312 (RNQQVKQAFINMARKTVFFTST) the chain is on the cytoplasmic side.

Belongs to the G-protein coupled receptor 1 family.

Its subcellular location is the cell membrane. In terms of biological role, odorant receptor. In Homo sapiens (Human), this protein is Olfactory receptor 6C1 (OR6C1).